The primary structure comprises 307 residues: MLKNKHLLDPSDFTIEEFDEIFKLAHQIMTNPKEYQNICNGKILATLFYEPSTRTRLSFESAMIRLGGQVIGFSEPNSSSVSKGESLRDTIKTVNCYADLIAMRHPLEGSAKVASMYSDIPVINAGDGGHQHPTQTLTDLLTIKEYKGNLEGNTIALCGDLKFGRTVHSLIKALSRYKNNKFILISPIELRIPNYIREQILEKNNIEYKEITSLEEGIKEADILYMTRIQRERFVDQSEYERLKDVYVLDEAKMKGAKEDMMVLHPLPRVNEIAYEVDEDSRAFYFKQAKCGMYVRMALMAKLLGEA.

Carbamoyl phosphate-binding residues include Arg54 and Thr55. L-aspartate is bound at residue Lys83. Residues Arg104, His132, and Gln135 each contribute to the carbamoyl phosphate site. L-aspartate contacts are provided by Arg165 and Arg228. 2 residues coordinate carbamoyl phosphate: Leu267 and Pro268.

Belongs to the aspartate/ornithine carbamoyltransferase superfamily. ATCase family. As to quaternary structure, heterododecamer (2C3:3R2) of six catalytic PyrB chains organized as two trimers (C3), and six regulatory PyrI chains organized as three dimers (R2).

The catalysed reaction is carbamoyl phosphate + L-aspartate = N-carbamoyl-L-aspartate + phosphate + H(+). The protein operates within pyrimidine metabolism; UMP biosynthesis via de novo pathway; (S)-dihydroorotate from bicarbonate: step 2/3. Its function is as follows. Catalyzes the condensation of carbamoyl phosphate and aspartate to form carbamoyl aspartate and inorganic phosphate, the committed step in the de novo pyrimidine nucleotide biosynthesis pathway. The polypeptide is Aspartate carbamoyltransferase catalytic subunit (Clostridium perfringens (strain SM101 / Type A)).